We begin with the raw amino-acid sequence, 368 residues long: UV excision repair protein rhp23 (368 aa).

Residues 1 to 77 (MNLTFKNLQQ…IVCMVSRPKT (77 aa)) form the Ubiquitin-like domain. Composition is skewed to low complexity over residues 76–88 (KTST…AASP) and 103–124 (APSS…AAPS). The segment at 76-134 (KTSTSTPKSAASPAPNPPASVPEKKVEAPSSTVAESTSTTQTVAAAAPSNPDTTATSEA) is disordered. Residues Ser-84 and Ser-87 each carry the phosphoserine modification. UBA domains follow at residues 135 to 185 (PIDA…LLTG) and 320 to 360 (QEES…LFEH). Ser-364 carries the post-translational modification Phosphoserine.

The protein resides in the nucleus. Its function is as follows. Involved in postreplication repair of UV-damaged DNA. Postreplication repair functions in gap-filling of a daughter strand on replication of damaged DNA. Functionally, protects ubiquitin chains against dissambly by deubiquitinating enzymes thereby promoting protein degradation. This Schizosaccharomyces pombe (strain 972 / ATCC 24843) (Fission yeast) protein is UV excision repair protein rhp23 (rhp23).